The chain runs to 123 residues: Large ribosomal subunit protein bL19c (123 aa).

This sequence belongs to the bacterial ribosomal protein bL19 family.

The protein resides in the plastid. It is found in the chloroplast. The sequence is that of Large ribosomal subunit protein bL19c (rpl19) from Porphyra purpurea (Red seaweed).